Consider the following 252-residue polypeptide: 5-oxoprolinase subunit A (252 aa).

It belongs to the LamB/PxpA family. As to quaternary structure, forms a complex composed of PxpA, PxpB and PxpC.

The catalysed reaction is 5-oxo-L-proline + ATP + 2 H2O = L-glutamate + ADP + phosphate + H(+). Functionally, catalyzes the cleavage of 5-oxoproline to form L-glutamate coupled to the hydrolysis of ATP to ADP and inorganic phosphate. The sequence is that of 5-oxoprolinase subunit A from Corynebacterium glutamicum (strain ATCC 13032 / DSM 20300 / JCM 1318 / BCRC 11384 / CCUG 27702 / LMG 3730 / NBRC 12168 / NCIMB 10025 / NRRL B-2784 / 534).